The chain runs to 232 residues: Ubiquinone biosynthesis O-methyltransferase (232 aa).

Residues Arg36, Gly55, Asp76, and Met120 each coordinate S-adenosyl-L-methionine.

This sequence belongs to the methyltransferase superfamily. UbiG/COQ3 family.

The enzyme catalyses a 3-demethylubiquinol + S-adenosyl-L-methionine = a ubiquinol + S-adenosyl-L-homocysteine + H(+). It catalyses the reaction a 3-(all-trans-polyprenyl)benzene-1,2-diol + S-adenosyl-L-methionine = a 2-methoxy-6-(all-trans-polyprenyl)phenol + S-adenosyl-L-homocysteine + H(+). The protein operates within cofactor biosynthesis; ubiquinone biosynthesis. In terms of biological role, O-methyltransferase that catalyzes the 2 O-methylation steps in the ubiquinone biosynthetic pathway. This is Ubiquinone biosynthesis O-methyltransferase from Burkholderia ambifaria (strain MC40-6).